The chain runs to 1040 residues: MKEIKGKVDFREMDKEIKEFWENNEIYQKVKKLNENYPDYYFVDGPPYCSGSIHLGTAWNKTIKDTVLRFKRMQNYNVLDKAGWDMHGLPIEVKVEHEFNLQSKKDIETKVGTDVFIEKCKEFALNNKEVMENQFKNLGIWLDWENAYLPIKNDYIEAGWWSLKRAHEKELLSKDLRVGYWCPRCETSLAEHEVRGEYQDVLDPSVYVKFKVADDNSYPNTYFVIWTTTPWTLISNLLIAVNPEFDYGFVEVIFDNERKETWVIAEALVEAVIKLAKKQNNIKSYNIVKKVKGKELEGIKYVPALLEENERQKEFFQLEKVHTIVLGEHVSLDGGTGLVHTAPGFGEEDFEVGKKYNSPIYSPIDDEGKYVEGKWKGVFVKDADEDIIATLTDKNLIVNAGKKKHTYPHCWRCKTPLLFRSTEQWFLNISKIKNNIVEHAKNTDWVPNWVETRYINGVKFVGDWNISRQRYWGIPLPIWICENKDCGKYKIIGSVEELKQEMINDIPINDDLHKPTVDKIIMKCDCGCEMKRTPDVLDVWYDSGLAPYASINAKELKKADFIVEGNDQVTKWFYSQHALSEIVFDDIPYKKCMMHGFTLDETGEKMSKSIGNVVNPDDVVEEFGADLLRFYLLSANKAWEDLRFSIGEMNDVKSVFNTLWNSYSFAVNYMVLDDFSPNEEYFNYLRDEDKWIISKINSLTKEAIEVLEIPHLHEYTWKVRDFILNDLSRWYIKLIRNRTWMEKEDPDKLSAYQTLYYVLMKLVVILAPVAPHISEKIYQNLKIEGMPQSIFMTKIVVEEEYINKEVEEGIETAREIVDAILKGRDKVKYTLRYPISKIILPNELGDIVNKYHYIIKEQGNVKNIEVKEFEGNISLKPNFRTLGASFKSDVPAVVKILNSQNPKELKDKLAEGEITIDGFTIKPEHVEFKIDIPDNIVGMELRKGSVYIDIELTEEIIKDGLKREVIRRIQSMRKDMDLDIEEKIKITMEGIEFNEDALKDIEKEVRGTFEPTIECDNIQEWNIKTPNGEVYNLKIGVKKN.

Residues 47–57 carry the 'HIGH' region motif; sequence PYCSGSIHLGT. Residues 605 to 609 carry the 'KMSKS' region motif; it reads KMSKS. K608 lines the ATP pocket.

Belongs to the class-I aminoacyl-tRNA synthetase family. IleS type 2 subfamily. Monomer. Requires Zn(2+) as cofactor.

The protein localises to the cytoplasm. It catalyses the reaction tRNA(Ile) + L-isoleucine + ATP = L-isoleucyl-tRNA(Ile) + AMP + diphosphate. Its function is as follows. Catalyzes the attachment of isoleucine to tRNA(Ile). As IleRS can inadvertently accommodate and process structurally similar amino acids such as valine, to avoid such errors it has two additional distinct tRNA(Ile)-dependent editing activities. One activity is designated as 'pretransfer' editing and involves the hydrolysis of activated Val-AMP. The other activity is designated 'posttransfer' editing and involves deacylation of mischarged Val-tRNA(Ile). The chain is Isoleucine--tRNA ligase from Methanococcus aeolicus (strain ATCC BAA-1280 / DSM 17508 / OCM 812 / Nankai-3).